A 218-amino-acid chain; its full sequence is Small ribosomal subunit protein uS3c (218 aa).

Positions 47-118 (VQNNIRISSG…KLNIAITRIS (72 aa)) constitute a KH type-2 domain.

It belongs to the universal ribosomal protein uS3 family. In terms of assembly, part of the 30S ribosomal subunit.

The protein localises to the plastid. The protein resides in the chloroplast. The sequence is that of Small ribosomal subunit protein uS3c (rps3) from Draba nemorosa (Woodland whitlowgrass).